We begin with the raw amino-acid sequence, 439 residues long: Probable glycine dehydrogenase (decarboxylating) subunit 1 (439 aa).

This sequence belongs to the GcvP family. N-terminal subunit subfamily. In terms of assembly, the glycine cleavage system is composed of four proteins: P, T, L and H. In this organism, the P 'protein' is a heterodimer of two subunits.

The catalysed reaction is N(6)-[(R)-lipoyl]-L-lysyl-[glycine-cleavage complex H protein] + glycine + H(+) = N(6)-[(R)-S(8)-aminomethyldihydrolipoyl]-L-lysyl-[glycine-cleavage complex H protein] + CO2. In terms of biological role, the glycine cleavage system catalyzes the degradation of glycine. The P protein binds the alpha-amino group of glycine through its pyridoxal phosphate cofactor; CO(2) is released and the remaining methylamine moiety is then transferred to the lipoamide cofactor of the H protein. This is Probable glycine dehydrogenase (decarboxylating) subunit 1 from Aquifex aeolicus (strain VF5).